We begin with the raw amino-acid sequence, 158 residues long: Endoribonuclease YbeY (158 aa).

Positions 114, 118, and 124 each coordinate Zn(2+).

This sequence belongs to the endoribonuclease YbeY family. Zn(2+) serves as cofactor.

It is found in the cytoplasm. Single strand-specific metallo-endoribonuclease involved in late-stage 70S ribosome quality control and in maturation of the 3' terminus of the 16S rRNA. The chain is Endoribonuclease YbeY from Legionella pneumophila (strain Paris).